Reading from the N-terminus, the 447-residue chain is GTPase Der (447 aa).

2 consecutive EngA-type G domains span residues 3–167 and 181–354; these read PVIA…VQER and VKIA…AAAM. Residues 9 to 16, 56 to 60, 119 to 122, 187 to 194, 234 to 238, and 299 to 302 each bind GTP; these read GRPNVGKS, DTGGF, NKAE, DTAGL, and NKWD. The KH-like domain maps to 355 to 439; the sequence is IKLPTPQITR…PLRIEFRTNK (85 aa).

The protein belongs to the TRAFAC class TrmE-Era-EngA-EngB-Septin-like GTPase superfamily. EngA (Der) GTPase family. Associates with the 50S ribosomal subunit.

GTPase that plays an essential role in the late steps of ribosome biogenesis. The protein is GTPase Der of Cupriavidus metallidurans (strain ATCC 43123 / DSM 2839 / NBRC 102507 / CH34) (Ralstonia metallidurans).